The chain runs to 561 residues: SH3 domain-binding protein 2 (561 aa).

The region spanning 26 to 130 is the PH domain; it reads GVAKAGYLHK…WMALLRREIG (105 aa). Disordered stretches follow at residues 160–316 and 333–451; these read VDIS…GACS and KLKS…YEKV. Acidic residues predominate over residues 170–188; the sequence is DNEDYEHDDEDDSYLEPDS. Residues tyrosine 174 and tyrosine 183 each carry the phosphotyrosine; by SYK modification. The short motif at 201–210 is the SH3-binding element; it reads PPAYPPPPVP. 2 stretches are compositionally biased toward pro residues: residues 202–213 and 233–242; these read PAYPPPPVPTPR and PLLPPPPPKH. Basic and acidic residues predominate over residues 252-266; it reads EDSKRDPLCPRRAEP. Serine 278 carries the post-translational modification Phosphoserine. Over residues 342 to 354 the composition is skewed to pro residues; it reads RGPPTSEPPPVPA. Phosphoserine is present on residues serine 416 and serine 427. Phosphotyrosine; by SYK is present on tyrosine 448. In terms of domain architecture, SH2 spans 457–555; it reads VFVNTTESCE…HQSLLLRHPY (99 aa).

Phosphorylated. Phosphorylation at Tyr-448 may stimulate the activity of the LYN kinase. Expressed in a variety of tissues including lung, liver, skeletal muscle, kidney and pancreas.

Its function is as follows. Binds differentially to the SH3 domains of certain proteins of signal transduction pathways. Binds to phosphatidylinositols; linking the hemopoietic tyrosine kinase fes to the cytoplasmic membrane in a phosphorylation dependent mechanism. The polypeptide is SH3 domain-binding protein 2 (SH3BP2) (Homo sapiens (Human)).